Reading from the N-terminus, the 266-residue chain is Esterase AGAP003155 (266 aa).

Active-site charge relay system residues include Ser114, Asp172, and His199. A disordered region spans residues 231 to 266 (ATEENSFHLEGQEEAEESALQPVHEGLQNGSDSDSD).

Belongs to the LovG family.

The sequence is that of Esterase AGAP003155 from Anopheles gambiae (African malaria mosquito).